We begin with the raw amino-acid sequence, 179 residues long: Protein GrpE (179 aa).

The segment at 1-23 (MSEEIKEQNVQDAQNENLAPDSV) is disordered.

This sequence belongs to the GrpE family. Homodimer.

The protein resides in the cytoplasm. In terms of biological role, participates actively in the response to hyperosmotic and heat shock by preventing the aggregation of stress-denatured proteins, in association with DnaK and GrpE. It is the nucleotide exchange factor for DnaK and may function as a thermosensor. Unfolded proteins bind initially to DnaJ; upon interaction with the DnaJ-bound protein, DnaK hydrolyzes its bound ATP, resulting in the formation of a stable complex. GrpE releases ADP from DnaK; ATP binding to DnaK triggers the release of the substrate protein, thus completing the reaction cycle. Several rounds of ATP-dependent interactions between DnaJ, DnaK and GrpE are required for fully efficient folding. The chain is Protein GrpE from Campylobacter curvus (strain 525.92).